Consider the following 157-residue polypeptide: Ribonuclease H (157 aa).

One can recognise an RNase H type-1 domain in the interval 3 to 144; sequence ELKQLYIFTD…CDVLARKAAE (142 aa). Mg(2+) is bound by residues Asp-12, Glu-50, Asp-72, and Asp-136.

The protein belongs to the RNase H family. As to quaternary structure, monomer. The cofactor is Mg(2+).

The protein resides in the cytoplasm. It catalyses the reaction Endonucleolytic cleavage to 5'-phosphomonoester.. Its function is as follows. Endonuclease that specifically degrades the RNA of RNA-DNA hybrids. This chain is Ribonuclease H, found in Shewanella frigidimarina (strain NCIMB 400).